Consider the following 230-residue polypeptide: U2 small nuclear ribonucleoprotein A' (230 aa).

3 LRR repeats span residues 19 to 40, 41 to 62, and 65 to 86; these read KDRE…PFFP, RLRM…LANS, and GLTT…DPLR. Positions 99-137 constitute an LRRCT domain; the sequence is NPVTRKEYYRLWIIWRIPSVRFLDYQKVKDAERAKAAEL. The tract at residues 211–230 is disordered; that stretch reads GRIPGGALDGAGNDGDQMQL. Residues 213–223 are compositionally biased toward gly residues; it reads IPGGALDGAGN.

The protein belongs to the U2 small nuclear ribonucleoprotein A family. Associated with the spliceosome.

It localises to the nucleus. In terms of biological role, involved in pre-mRNA splicing. The chain is U2 small nuclear ribonucleoprotein A' (lea1) from Emericella nidulans (strain FGSC A4 / ATCC 38163 / CBS 112.46 / NRRL 194 / M139) (Aspergillus nidulans).